A 61-amino-acid chain; its full sequence is MDPNCSCATGDSCTCASSCKCKECKCTSCKKSCCSCCPAGCTKCAQGCICKGASDKCSCCA.

Met-1 bears the N-acetylmethionine mark. Residues 1–29 (MDPNCSCATGDSCTCASSCKCKECKCTSC) are beta. Residues Cys-5, Cys-7, Cys-13, Cys-15, Cys-19, Cys-21, Cys-24, Cys-26, Cys-29, Cys-33, Cys-34, Cys-36, Cys-37, Cys-41, Cys-44, Cys-48, Cys-50, Cys-57, Cys-59, and Cys-60 each coordinate a divalent metal cation. Positions 30-61 (KKSCCSCCPAGCTKCAQGCICKGASDKCSCCA) are alpha.

Belongs to the metallothionein superfamily. Type 1 family. As to quaternary structure, monomer.

Metallothioneins have a high content of cysteine residues that bind various heavy metals; these proteins are transcriptionally regulated by both heavy metals and glucocorticoids. This is Metallothionein-2B from Oryctolagus cuniculus (Rabbit).